The following is a 302-amino-acid chain: Protoheme IX farnesyltransferase (302 aa).

Transmembrane regions (helical) follow at residues 24–44 (VVSL…FSGY), 48–68 (FFSV…AGAL), 97–117 (AALV…ELAV), 120–140 (LSAV…TVYL), 147–167 (NIVV…AAVA), 174–194 (SLVL…ALAL), 221–241 (ILCY…LRFS), 245–265 (YMIV…NVYL), and 282–302 (FLLF…GMLI).

The protein belongs to the UbiA prenyltransferase family. Protoheme IX farnesyltransferase subfamily.

The protein localises to the cell inner membrane. The catalysed reaction is heme b + (2E,6E)-farnesyl diphosphate + H2O = Fe(II)-heme o + diphosphate. Its pathway is porphyrin-containing compound metabolism; heme O biosynthesis; heme O from protoheme: step 1/1. Functionally, converts heme B (protoheme IX) to heme O by substitution of the vinyl group on carbon 2 of heme B porphyrin ring with a hydroxyethyl farnesyl side group. This Neorickettsia sennetsu (strain ATCC VR-367 / Miyayama) (Ehrlichia sennetsu) protein is Protoheme IX farnesyltransferase.